The sequence spans 49 residues: MNQARIWLVVKPSVGLPLLLGVVLLIALLVHGAILTNTSWYPTYFEGNW.

The Cytoplasmic segment spans residues 1–14 (MNQARIWLVVKPSV). Residues 15–35 (GLPLLLGVVLLIALLVHGAIL) traverse the membrane as a helical segment. Position 31 (His31) interacts with a bacteriochlorophyll. The Periplasmic segment spans residues 36 to 49 (TNTSWYPTYFEGNW).

Belongs to the antenna complex alpha subunit family. In terms of assembly, the core complex is formed by different alpha and beta chains, binding bacteriochlorophyll molecules, and arranged most probably in tetrameric structures disposed around the reaction center. The non-pigmented gamma chains may constitute additional components.

It localises to the cell inner membrane. In terms of biological role, antenna complexes are light-harvesting systems, which transfer the excitation energy to the reaction centers. The chain is Light-harvesting protein B800/850/890 alpha-3 chain from Halorhodospira halophila (strain DSM 244 / SL1) (Ectothiorhodospira halophila (strain DSM 244 / SL1)).